Consider the following 429-residue polypeptide: UDP-N-acetylglucosamine 1-carboxyvinyltransferase (429 aa).

22–23 (KN) is a binding site for phosphoenolpyruvate. Arg-102 serves as a coordination point for UDP-N-acetyl-alpha-D-glucosamine. The Proton donor role is filled by Cys-126. A 2-(S-cysteinyl)pyruvic acid O-phosphothioketal modification is found at Cys-126. UDP-N-acetyl-alpha-D-glucosamine is bound by residues 171–174 (KVSV), Asp-316, and Ile-338.

The protein belongs to the EPSP synthase family. MurA subfamily.

The protein resides in the cytoplasm. The catalysed reaction is phosphoenolpyruvate + UDP-N-acetyl-alpha-D-glucosamine = UDP-N-acetyl-3-O-(1-carboxyvinyl)-alpha-D-glucosamine + phosphate. The protein operates within cell wall biogenesis; peptidoglycan biosynthesis. Its function is as follows. Cell wall formation. Adds enolpyruvyl to UDP-N-acetylglucosamine. This is UDP-N-acetylglucosamine 1-carboxyvinyltransferase from Xanthobacter autotrophicus (strain ATCC BAA-1158 / Py2).